The chain runs to 1940 residues: Myosin-2 (1940 aa).

Residues 33–82 (DAKTSVFVAEPKESFVKGTIQSREGGKVTVKTEGGATLTVKEDQVFPMNP) enclose the Myosin N-terminal SH3-like domain. A phosphothreonine mark is found at Thr-64 and Thr-69. The Myosin motor domain occupies 86–783 (DKIEDMAMMT…LLGLLEEMRD (698 aa)). An N6,N6,N6-trimethyllysine modification is found at Lys-130. 179–186 (GESGAGKT) is an ATP binding site. A Phosphotyrosine modification is found at Tyr-389. The residue at position 392 (Ser-392) is a Phosphoserine. The residue at position 419 (Thr-419) is a Phosphothreonine. Residue Ser-625 is modified to Phosphoserine. Residues 660–682 (LNKLMTNLRSTHPHFVRCIIPNE) are actin-binding. His-758 is modified (pros-methylhistidine). Positions 762–776 (KFGHTKVFFKAGLLG) are actin-binding. The region spanning 786 to 815 (LAQLMTRTQARCRGFLARVEYQKMVERRES) is the IQ domain. Residues 844–1940 (LLKSAETEKE…EVHTKIISEE (1097 aa)) adopt a coiled-coil conformation. A phosphoserine mark is found at Ser-1093, Ser-1097, Ser-1163, and Ser-1238. Thr-1242 is modified (phosphothreonine). Ser-1244 is modified (phosphoserine). Phosphothreonine occurs at positions 1256 and 1287. Phosphoserine occurs at positions 1289, 1293, 1304, and 1307. At Tyr-1465 the chain carries Phosphotyrosine. Thr-1468 bears the Phosphothreonine mark. The residue at position 1493 (Tyr-1493) is a Phosphotyrosine. Ser-1496 carries the phosphoserine modification. At Thr-1502 the chain carries Phosphothreonine. Ser-1515 is modified (phosphoserine). Phosphothreonine is present on Thr-1518. Residues Ser-1543, Ser-1555, Ser-1575, Ser-1601, Ser-1715, and Ser-1727 each carry the phosphoserine modification. Thr-1731 and Thr-1737 each carry phosphothreonine. A disordered region spans residues 1886 to 1905 (QAEEAEEQSNTNLSKFRKLQ).

It belongs to the TRAFAC class myosin-kinesin ATPase superfamily. Myosin family. In terms of assembly, muscle myosin is a hexameric protein that consists of 2 heavy chain subunits (MHC), 2 alkali light chain subunits (MLC) and 2 regulatory light chain subunits (MLC-2). Interacts with GCSAM.

Its subcellular location is the cytoplasm. The protein localises to the myofibril. Its function is as follows. Myosins are actin-based motor molecules with ATPase activity essential for muscle contraction. The chain is Myosin-2 (MYH2) from Bos taurus (Bovine).